We begin with the raw amino-acid sequence, 536 residues long: Phosphoenolpyruvate carboxykinase (ATP) (536 aa).

Positions 61, 195, and 201 each coordinate substrate. Residues K201, H220, and 236 to 244 (GLSGTGKTT) contribute to the ATP site. Residues K201 and H220 each coordinate Mn(2+). A Mn(2+)-binding site is contributed by D257. ATP is bound by residues E285, R322, and T447. R322 serves as a coordination point for substrate.

Belongs to the phosphoenolpyruvate carboxykinase (ATP) family. The cofactor is Mn(2+).

The protein resides in the cytoplasm. The enzyme catalyses oxaloacetate + ATP = phosphoenolpyruvate + ADP + CO2. Its pathway is carbohydrate biosynthesis; gluconeogenesis. Its function is as follows. Involved in the gluconeogenesis. Catalyzes the conversion of oxaloacetate (OAA) to phosphoenolpyruvate (PEP) through direct phosphoryl transfer between the nucleoside triphosphate and OAA. This chain is Phosphoenolpyruvate carboxykinase (ATP), found in Rhizobium rhizogenes (strain K84 / ATCC BAA-868) (Agrobacterium radiobacter).